The chain runs to 73 residues: Waprin-Phi2 (73 aa).

The signal sequence occupies residues 1 to 21 (MKATLLLLLLFAVILPGTISA). Residues 22 to 72 (EQEKPGSCPNVDMPIPPLGLCKTTCSKDSDCSETKKCCKNGCGFMTCTTAR) form the WAP domain. Disulfide bonds link Cys-29/Cys-59, Cys-42/Cys-63, Cys-46/Cys-58, and Cys-52/Cys-68.

It belongs to the venom waprin family. In terms of tissue distribution, expressed by the venom gland.

It localises to the secreted. Functionally, damages membranes of susceptible bacteria. Has no hemolytic activity. Not toxic to mice. Does not inhibit the proteinases elastase and cathepsin G. In Philodryas olfersii (Green snake), this protein is Waprin-Phi2.